The chain runs to 56 residues: Large ribosomal subunit protein bL32 (56 aa).

The disordered stretch occupies residues 1 to 37; it reads MAVQQNKKSRSRRDMRRSHDALTTAAVSVDKTTGETH. Positions 7–16 are enriched in basic residues; that stretch reads KKSRSRRDMR.

Belongs to the bacterial ribosomal protein bL32 family.

The sequence is that of Large ribosomal subunit protein bL32 from Haemophilus ducreyi (strain 35000HP / ATCC 700724).